A 245-amino-acid chain; its full sequence is 1-(5-phosphoribosyl)-5-[(5-phosphoribosylamino)methylideneamino] imidazole-4-carboxamide isomerase (245 aa).

D7 (proton acceptor) is an active-site residue. D129 acts as the Proton donor in catalysis.

It belongs to the HisA/HisF family.

The protein localises to the cytoplasm. It catalyses the reaction 1-(5-phospho-beta-D-ribosyl)-5-[(5-phospho-beta-D-ribosylamino)methylideneamino]imidazole-4-carboxamide = 5-[(5-phospho-1-deoxy-D-ribulos-1-ylimino)methylamino]-1-(5-phospho-beta-D-ribosyl)imidazole-4-carboxamide. The protein operates within amino-acid biosynthesis; L-histidine biosynthesis; L-histidine from 5-phospho-alpha-D-ribose 1-diphosphate: step 4/9. This is 1-(5-phosphoribosyl)-5-[(5-phosphoribosylamino)methylideneamino] imidazole-4-carboxamide isomerase from Escherichia coli O81 (strain ED1a).